Here is a 476-residue protein sequence, read N- to C-terminus: Sulfate adenylyltransferase subunit 1 (476 aa).

In terms of domain architecture, tr-type G spans 24–241; the sequence is KSLLRFLTCG…EDVDFVQEQE (218 aa). The segment at 33–40 is G1; sequence GSVDDGKS. 33–40 is a binding site for GTP; the sequence is GSVDDGKS. The interval 91–95 is G2; sequence GITID. The segment at 112–115 is G3; the sequence is DTPG. GTP-binding positions include 112 to 116 and 167 to 170; these read DTPGH and NKMD. Residues 167–170 form a G4 region; the sequence is NKMD. Residues 205–207 form a G5 region; that stretch reads SAL.

Belongs to the TRAFAC class translation factor GTPase superfamily. Classic translation factor GTPase family. CysN/NodQ subfamily. In terms of assembly, heterodimer composed of CysD, the smaller subunit, and CysN.

The enzyme catalyses sulfate + ATP + H(+) = adenosine 5'-phosphosulfate + diphosphate. It participates in sulfur metabolism; hydrogen sulfide biosynthesis; sulfite from sulfate: step 1/3. Functionally, with CysD forms the ATP sulfurylase (ATPS) that catalyzes the adenylation of sulfate producing adenosine 5'-phosphosulfate (APS) and diphosphate, the first enzymatic step in sulfur assimilation pathway. APS synthesis involves the formation of a high-energy phosphoric-sulfuric acid anhydride bond driven by GTP hydrolysis by CysN coupled to ATP hydrolysis by CysD. In Photobacterium profundum (strain SS9), this protein is Sulfate adenylyltransferase subunit 1.